The chain runs to 415 residues: F-box protein ETP1 (415 aa).

The F-box domain maps to 1 to 46 (MTIPDLCNDLVDEILCRVPARNLKRLRSTSKRWNRLFKDDRRFARE).

As to quaternary structure, interacts with EIN2 (via C-terminus).

Functionally, negative regulator of EIN2 protein stability. This chain is F-box protein ETP1, found in Arabidopsis thaliana (Mouse-ear cress).